The following is a 303-amino-acid chain: Oxygen-dependent coproporphyrinogen-III oxidase (303 aa).

Ser94 is a binding site for substrate. The a divalent metal cation site is built by His98 and His108. Catalysis depends on His108, which acts as the Proton donor. Asn110–Arg112 provides a ligand contact to substrate. Residues His147 and His177 each coordinate a divalent metal cation. The tract at residues Tyr242 to Glu277 is important for dimerization. Gly260–Arg262 is a substrate binding site.

The protein belongs to the aerobic coproporphyrinogen-III oxidase family. Homodimer. The cofactor is a divalent metal cation.

The protein resides in the cytoplasm. The enzyme catalyses coproporphyrinogen III + O2 + 2 H(+) = protoporphyrinogen IX + 2 CO2 + 2 H2O. The protein operates within porphyrin-containing compound metabolism; protoporphyrin-IX biosynthesis; protoporphyrinogen-IX from coproporphyrinogen-III (O2 route): step 1/1. Its function is as follows. Involved in the heme biosynthesis. Catalyzes the aerobic oxidative decarboxylation of propionate groups of rings A and B of coproporphyrinogen-III to yield the vinyl groups in protoporphyrinogen-IX. The protein is Oxygen-dependent coproporphyrinogen-III oxidase of Saccharophagus degradans (strain 2-40 / ATCC 43961 / DSM 17024).